Consider the following 268-residue polypeptide: Cell division cycle-associated protein 3 (268 aa).

Disordered stretches follow at residues 1–232 (MGSA…SELK) and 247–268 (GRAW…LVES). Phosphoserine is present on residues Ser-29 and Ser-31. Position 37 is a phosphothreonine (Thr-37). Residues Ser-44, Ser-64, and Ser-68 each carry the phosphoserine modification. Positions 56–66 (EGLKHAQDSDP) are enriched in basic and acidic residues. The residue at position 76 (Thr-76) is a Phosphothreonine. 2 positions are modified to phosphoserine: Ser-87 and Ser-94. The interval 91 to 120 (KQLSEVFETEDSKSNLPPEPVLPPEAPLSS) is F-box-like. Pro residues predominate over residues 107-116 (PPEPVLPPEA). A compositionally biased stretch (low complexity) spans 117–126 (PLSSELDLPL). Polar residues-rich tracts occupy residues 128–149 (TQLS…SKQV), 158–169 (PTETPVASQSSD), and 178–194 (PRSS…NSSK). The residue at position 199 (Ser-199) is a Phosphoserine. Thr-202 is modified (phosphothreonine). Positions 205 to 215 (QDDNSPGTLTL) are enriched in polar residues. Ser-209 carries the post-translational modification Phosphoserine. Residue Thr-212 is modified to Phosphothreonine. The KEN box signature appears at 258–260 (KEN).

Interacts with SKP1. Part of a SCF (SKP1-cullin-F-box) protein ligase complex. Ubiquitinated and degraded by the APC/C-Cdh1 complex.

It localises to the cytoplasm. The protein localises to the cytosol. The protein operates within protein modification; protein ubiquitination. In terms of biological role, F-box-like protein which is required for entry into mitosis. Acts by participating in E3 ligase complexes that mediate the ubiquitination and degradation of WEE1 kinase at G2/M phase. This Homo sapiens (Human) protein is Cell division cycle-associated protein 3 (CDCA3).